Consider the following 364-residue polypeptide: tRNA N6-adenosine threonylcarbamoyltransferase (364 aa).

The Fe cation site is built by His-115 and His-119. Substrate-binding positions include 137–141 (LVSGG), Asp-170, Gly-183, and Asn-288. Asp-316 is a Fe cation binding site.

The protein belongs to the KAE1 / TsaD family. Requires Fe(2+) as cofactor.

The protein localises to the cytoplasm. It carries out the reaction L-threonylcarbamoyladenylate + adenosine(37) in tRNA = N(6)-L-threonylcarbamoyladenosine(37) in tRNA + AMP + H(+). Functionally, required for the formation of a threonylcarbamoyl group on adenosine at position 37 (t(6)A37) in tRNAs that read codons beginning with adenine. Is involved in the transfer of the threonylcarbamoyl moiety of threonylcarbamoyl-AMP (TC-AMP) to the N6 group of A37, together with TsaE and TsaB. TsaD likely plays a direct catalytic role in this reaction. In Bartonella tribocorum (strain CIP 105476 / IBS 506), this protein is tRNA N6-adenosine threonylcarbamoyltransferase.